A 123-amino-acid chain; its full sequence is UPF0482 protein YE2026 (123 aa).

Positions 1-31 (MKITSLPRLMRVFLPVAVLALPLAWQTAALA) are cleaved as a signal peptide. Residues 47 to 66 (GNNDPMSKEQARQSQQQWDD) form a disordered region.

This sequence belongs to the UPF0482 family.

This Yersinia enterocolitica serotype O:8 / biotype 1B (strain NCTC 13174 / 8081) protein is UPF0482 protein YE2026.